A 396-amino-acid chain; its full sequence is Cell adhesion molecule 3 (396 aa).

Positions 1-22 are cleaved as a signal peptide; that stretch reads MGAPSALPLLLLLACSWAPGGA. An Ig-like V-type domain is found at 23–124; it reads NLSQDDSQPW…VRTAKSLVTV (102 aa). Over 23 to 328 the chain is Extracellular; sequence NLSQDDSQPW…PVPSSSSTYH (306 aa). 3 cysteine pairs are disulfide-bonded: Cys-48/Cys-108, Cys-150/Cys-207, and Cys-252/Cys-297. 2 consecutive Ig-like C2-type domains span residues 128–226 and 231–313; these read PQKP…QRIE and PTAM…FTLN. Asn-288 carries N-linked (GlcNAc...) asparagine glycosylation. Residues 329–349 form a helical membrane-spanning segment; sequence AIIGGIVAFIVFLLLILLIFL. Residues 350–396 lie on the Cytoplasmic side of the membrane; that stretch reads GHYLIRHKGTYLTHEAKGSDDAPDADTAIINAEGGQSGGDDKKEYFI. The tract at residues 365–396 is disordered; that stretch reads AKGSDDAPDADTAIINAEGGQSGGDDKKEYFI. Phosphoserine is present on Ser-386.

Belongs to the nectin family. In terms of assembly, homodimer. Can form trans-heterodimers with NECTIN3. Interacts with EPB41L1, DLG3, PALS2 and CASK.

It is found in the cell membrane. The protein resides in the cell junction. Its function is as follows. Involved in cell-cell adhesion. Has both calcium-independent homophilic cell-cell adhesion activity and calcium-independent heterophilic cell-cell adhesion activity with IGSF4, NECTIN1 and NECTIN3. Interaction with EPB41L1 may regulate structure or function of cell-cell junctions. The chain is Cell adhesion molecule 3 (Cadm3) from Rattus norvegicus (Rat).